We begin with the raw amino-acid sequence, 1036 residues long: Exportin-T (1036 aa).

Belongs to the exportin family.

The protein resides in the nucleus. The protein localises to the cytoplasm. Its function is as follows. tRNA nucleus export receptor which facilitates tRNA translocation across the nuclear pore complex. Involved in pre-tRNA splicing, probably by affecting the interaction of pre-tRNA with splicing endonuclease. The sequence is that of Exportin-T (LOS1) from Phaeosphaeria nodorum (strain SN15 / ATCC MYA-4574 / FGSC 10173) (Glume blotch fungus).